Here is a 319-residue protein sequence, read N- to C-terminus: tRNA uridine(34) hydroxylase (319 aa).

The region spanning 127-221 (KQEDTVIIDA…YGKDPEVQGE (95 aa)) is the Rhodanese domain. Cysteine 181 acts as the Cysteine persulfide intermediate in catalysis.

The protein belongs to the TrhO family.

The catalysed reaction is uridine(34) in tRNA + AH2 + O2 = 5-hydroxyuridine(34) in tRNA + A + H2O. Functionally, catalyzes oxygen-dependent 5-hydroxyuridine (ho5U) modification at position 34 in tRNAs. The protein is tRNA uridine(34) hydroxylase of Bacillus mycoides (strain KBAB4) (Bacillus weihenstephanensis).